The chain runs to 634 residues: 1-deoxy-D-xylulose-5-phosphate synthase (634 aa).

Thiamine diphosphate contacts are provided by residues H74 and 115–117 (AHS). D146 contributes to the Mg(2+) binding site. Residues 147-148 (GA), N176, Y283, and E365 contribute to the thiamine diphosphate site. N176 contributes to the Mg(2+) binding site.

The protein belongs to the transketolase family. DXPS subfamily. In terms of assembly, homodimer. It depends on Mg(2+) as a cofactor. Thiamine diphosphate is required as a cofactor.

The catalysed reaction is D-glyceraldehyde 3-phosphate + pyruvate + H(+) = 1-deoxy-D-xylulose 5-phosphate + CO2. Its pathway is metabolic intermediate biosynthesis; 1-deoxy-D-xylulose 5-phosphate biosynthesis; 1-deoxy-D-xylulose 5-phosphate from D-glyceraldehyde 3-phosphate and pyruvate: step 1/1. Catalyzes the acyloin condensation reaction between C atoms 2 and 3 of pyruvate and glyceraldehyde 3-phosphate to yield 1-deoxy-D-xylulose-5-phosphate (DXP). This Burkholderia pseudomallei (strain 668) protein is 1-deoxy-D-xylulose-5-phosphate synthase.